Consider the following 520-residue polypeptide: MKEAVKNVKPKVPAKKRIITGSKTKKKVFVKKKPPDKKPLKKPVKKTVKTDKPKSIYVPNKDLKISKWIPTPKKEFTEIETNSWYEHRKFENPNKSPVQTYNKIVPVVPPESIKQQNLANKRKKTNRPIVFISSEKIRIYPTKDQQKILQTWFRLFAYMYNCTIDYINSKKVVLESGRINVAATRKVCNKISVRKAQKTIRDNLIQSTNPSIMTHIIDEAIGLACSNYKTCLTNYIERHIKKFDIKPWNMSKRKKIIIIEANFFKKGTFCPTVFPKMESSKPLTMIDKTVTLQYDSDTRKYILFVPRVTPKYSVNKEKNSCGIDPGLRDFLTVYSENETQSICPIEIVVNTTKNEYKKIDKINEIIKTKPNLNSKRKKKLNRGLRKYHRRVTNKMKDMHYKVSHELVNTFDKICIGKLNVKSILSKANTVLKSALKRKLATLSFYRFTQRLTHMGYKYGTEVVNVNEYLTTKTCSNCGKIKDLGASKIYECESCGMYADRDENAAKNILKVGLKPWYKQK.

Residues 21-47 are compositionally biased toward basic residues; it reads GSKTKKKVFVKKKPPDKKPLKKPVKKT. The interval 21 to 52 is disordered; it reads GSKTKKKVFVKKKPPDKKPLKKPVKKTVKTDK. Residues C474, C477, C491, and C494 each coordinate Zn(2+).

In the central section; belongs to the transposase 2 family. It in the C-terminal section; belongs to the transposase 35 family.

The polypeptide is TnpB-like protein L79 (Acanthamoeba polyphaga mimivirus (APMV)).